Reading from the N-terminus, the 344-residue chain is L-sulfolactate dehydrogenase (344 aa).

Belongs to the LDH2/MDH2 oxidoreductase family.

The protein localises to the cytoplasm. It catalyses the reaction a (2S)-2-hydroxycarboxylate + NAD(+) = a 2-oxocarboxylate + NADH + H(+). It participates in cofactor biosynthesis; coenzyme M biosynthesis; sulfoacetaldehyde from phosphoenolpyruvate and sulfite: step 3/4. The protein operates within cofactor biosynthesis; 5,6,7,8-tetrahydromethanopterin biosynthesis. Functionally, catalyzes the reduction of sulfopyruvate to (R)-sulfolactate much more efficiently than the reverse reaction. Also catalyzes the reduction of oxaloacetate, alpha-ketoglutarate, and to a much lower extent, KHTCA, but not pyruvate. Involved in the biosynthesis of both coenzyme M (with (R)-sulfolactate) and methanopterin (with alpha-ketoglutarate). In Methanocaldococcus jannaschii (strain ATCC 43067 / DSM 2661 / JAL-1 / JCM 10045 / NBRC 100440) (Methanococcus jannaschii), this protein is L-sulfolactate dehydrogenase (comC).